We begin with the raw amino-acid sequence, 393 residues long: Zinc finger CCCH domain-containing protein 2 (393 aa).

Residues 1 to 71 (MDVVCTEHQM…NRENKEYCYD (71 aa)) form a disordered region. Residues 20–37 (RKLLLSSKSFPSDSSSPR) are compositionally biased toward low complexity. A compositionally biased stretch (basic and acidic residues) spans 60–69 (DNNRENKEYC). 2 consecutive C3H1-type zinc fingers follow at residues 122–150 (QYSGEVCPEFRRGGDCSRGDDCEFAHGVF) and 159–181 (YRTEACKDGKHCKRKVCFFAHSP).

Interacts with MARD1/FLZ9 and RD21A. In terms of tissue distribution, specifically expressed in seeds.

The protein resides in the nucleus. Its function is as follows. Probable transcription repressor that functions as a negative regulator of phytochrome-mediated promotion of seed germination. Inhibits seed germination by regulating the expression of gibberellic acid (GA) and abscisic acid (ABA) metabolic genes. Does not regulate the expression of the DELLA genes RGA and RGA1. Activated by PIL5, a phytochrome-interacting basic helix-loop-helix transcription factor. Represses directly JMJ20 and JMJ22 expression in the absence of red light (R) and in far-red (FR) conditions. The polypeptide is Zinc finger CCCH domain-containing protein 2 (Arabidopsis thaliana (Mouse-ear cress)).